We begin with the raw amino-acid sequence, 255 residues long: 5-oxoprolinase subunit A 1 (255 aa).

It belongs to the LamB/PxpA family. Forms a complex composed of PxpA, PxpB and PxpC.

It carries out the reaction 5-oxo-L-proline + ATP + 2 H2O = L-glutamate + ADP + phosphate + H(+). Its function is as follows. Catalyzes the cleavage of 5-oxoproline to form L-glutamate coupled to the hydrolysis of ATP to ADP and inorganic phosphate. This Bradyrhizobium diazoefficiens (strain JCM 10833 / BCRC 13528 / IAM 13628 / NBRC 14792 / USDA 110) protein is 5-oxoprolinase subunit A 1.